Reading from the N-terminus, the 663-residue chain is Transketolase 2 (663 aa).

Histidine 25 is a binding site for substrate. Residues histidine 65 and 113–115 each bind thiamine diphosphate; that span reads GPL. Aspartate 154 lines the Mg(2+) pocket. Positions 155 and 184 each coordinate thiamine diphosphate. Positions 184 and 186 each coordinate Mg(2+). Histidine 259, arginine 356, and serine 383 together coordinate substrate. Residue histidine 259 participates in thiamine diphosphate binding. Glutamate 410 serves as the catalytic Proton donor. Phenylalanine 436 is a binding site for thiamine diphosphate. Histidine 460, aspartate 468, and arginine 519 together coordinate substrate.

Belongs to the transketolase family. As to quaternary structure, homodimer. Requires Mg(2+) as cofactor. The cofactor is Ca(2+). Mn(2+) serves as cofactor. It depends on Co(2+) as a cofactor. Thiamine diphosphate is required as a cofactor.

The enzyme catalyses D-sedoheptulose 7-phosphate + D-glyceraldehyde 3-phosphate = aldehydo-D-ribose 5-phosphate + D-xylulose 5-phosphate. Its function is as follows. Catalyzes the transfer of a two-carbon ketol group from a ketose donor to an aldose acceptor, via a covalent intermediate with the cofactor thiamine pyrophosphate. The chain is Transketolase 2 (tkt2) from Aliivibrio fischeri (strain ATCC 700601 / ES114) (Vibrio fischeri).